Here is a 347-residue protein sequence, read N- to C-terminus: Heme A synthase (347 aa).

Transmembrane regions (helical) follow at residues 17-37, 106-126, 132-152, 165-185, 202-222, 260-280, 295-315, and 317-337; these read LANWLLLVAVLVFAIVVVGGI, GIGAVLAGVMIVAWWKRAIPA, MIGIFALGGLQGAIGWWMVYS, LATHLIAALLIFSALVWTVLD, ALAIAAVLILAVQIMLGAFVA, IVVQFVHRWWAWAAAIAALAV, AVATLIVVQIALGIATLLTGV, and IAVAVAHQAVAVLLLAALLWA. Histidine 266 serves as a coordination point for heme. Position 323 (histidine 323) interacts with heme.

The protein belongs to the COX15/CtaA family. Type 2 subfamily. In terms of assembly, interacts with CtaB. Requires heme b as cofactor.

The protein localises to the cell membrane. The enzyme catalyses Fe(II)-heme o + 2 A + H2O = Fe(II)-heme a + 2 AH2. The protein operates within porphyrin-containing compound metabolism; heme A biosynthesis; heme A from heme O: step 1/1. Functionally, catalyzes the conversion of heme O to heme A by two successive hydroxylations of the methyl group at C8. The first hydroxylation forms heme I, the second hydroxylation results in an unstable dihydroxymethyl group, which spontaneously dehydrates, resulting in the formyl group of heme A. The polypeptide is Heme A synthase (Rhizorhabdus wittichii (strain DSM 6014 / CCUG 31198 / JCM 15750 / NBRC 105917 / EY 4224 / RW1) (Sphingomonas wittichii)).